The following is a 344-amino-acid chain: MLELKQVGKVYQREQQTFTALSDISLKIEAGEIYGIIGYSGAGKSTLIRLLNGLEKPTSGDVLVNGQSIVGLSEQAMRPIRQKIGMIFQHFNLLWSKTILENIALPLKLAGVGKKERLAKAKEMLALVELTDLGAAYPSELSGGQKQRVAIARALISEPAILLCDEATSALDPKTTNSILSLLAKINQEMGITIVLVTHEMDAVRRICQRIAVMAAGRVIEEGTTQAIFETPQAEVTKAFVSESLVITPSETAASIEQLLTRVPEGTIIKLRFNEEQSSQPVIGQLMRRYPSVEVSVISGSLQQTINGALGYLYIQIQASPDDLKQALSDLSQQTIEVEVLRHG.

The ABC transporter domain occupies 2–241 (LELKQVGKVY…PQAEVTKAFV (240 aa)). 38–45 (GYSGAGKS) contacts ATP.

Belongs to the ABC transporter superfamily. Methionine importer (TC 3.A.1.24) family. The complex is composed of two ATP-binding proteins (MetN), two transmembrane proteins (MetI) and a solute-binding protein (MetQ).

Its subcellular location is the cell membrane. The enzyme catalyses L-methionine(out) + ATP + H2O = L-methionine(in) + ADP + phosphate + H(+). It carries out the reaction D-methionine(out) + ATP + H2O = D-methionine(in) + ADP + phosphate + H(+). Part of the ABC transporter complex MetNIQ involved in methionine import. Responsible for energy coupling to the transport system. The protein is Methionine import ATP-binding protein MetN of Latilactobacillus sakei subsp. sakei (strain 23K) (Lactobacillus sakei subsp. sakei).